Reading from the N-terminus, the 325-residue chain is Elongation factor P--(R)-beta-lysine ligase (325 aa).

76-78 (SPE) serves as a coordination point for substrate. Residues 100 to 102 (RNE) and Asn109 contribute to the ATP site. Tyr118 lines the substrate pocket. An ATP-binding site is contributed by 244–245 (EL). Residue Glu251 participates in substrate binding. Gly300 contributes to the ATP binding site.

Belongs to the class-II aminoacyl-tRNA synthetase family. EpmA subfamily. Homodimer.

The enzyme catalyses D-beta-lysine + L-lysyl-[protein] + ATP = N(6)-((3R)-3,6-diaminohexanoyl)-L-lysyl-[protein] + AMP + diphosphate + H(+). Functionally, with EpmB is involved in the beta-lysylation step of the post-translational modification of translation elongation factor P (EF-P). Catalyzes the ATP-dependent activation of (R)-beta-lysine produced by EpmB, forming a lysyl-adenylate, from which the beta-lysyl moiety is then transferred to the epsilon-amino group of a conserved specific lysine residue in EF-P. The polypeptide is Elongation factor P--(R)-beta-lysine ligase (Edwardsiella ictaluri (strain 93-146)).